A 135-amino-acid chain; its full sequence is Galectin-1 (135 aa).

Ala2 bears the N-acetylalanine mark. In terms of domain architecture, Galectin spans 4 to 135; it reads GLVASNLNLK…DFKIKCVAFE (132 aa). 3 positions are modified to N6-acetyllysine: Lys13, Lys19, and Lys29. Ser30 bears the Phosphoserine mark. A beta-D-galactoside is bound by residues 45–49, His53, Asn62, and 69–72; these read HFNPR and WGAE. N6-acetyllysine is present on Lys128.

As to quaternary structure, homodimer. Binds LGALS3BP. Interacts with CD2, CD3, CD4, CD6, CD7, CD43, ALCAM and CD45. Interacts with laminin (via poly-N-acetyllactosamine). Interacts with SUSD2. Interacts with cargo receptor TMED10; the interaction mediates the translocation from the cytoplasm into the ERGIC (endoplasmic reticulum-Golgi intermediate compartment) and thereby secretion.

It localises to the secreted. Its subcellular location is the extracellular space. It is found in the extracellular matrix. The protein localises to the cytoplasm. Its function is as follows. Lectin that binds beta-galactoside and a wide array of complex carbohydrates. Plays a role in regulating apoptosis, cell proliferation and cell differentiation. Inhibits CD45 protein phosphatase activity and therefore the dephosphorylation of Lyn kinase. Strong inducer of T-cell apoptosis. The sequence is that of Galectin-1 (LGALS1) from Sus scrofa (Pig).